Reading from the N-terminus, the 84-residue chain is Dolichol phosphate-mannose biosynthesis regulatory protein (84 aa).

A run of 2 helical transmembrane segments spans residues 11 to 31 (LGLVALSLIIFTYYTAWVILL) and 49 to 69 (YAIAIPLAAGHLLLLFVGIFI).

The protein belongs to the DPM2 family. In terms of assembly, component of the dolichol-phosphate mannose (DPM) synthase complex composed of DPM1, DPM2 and DPM3; in the complex interacts directly with DPM3. Component of the glycosylphosphatidylinositol-N-acetylglucosaminyltransferase (GPI-GnT) complex composed at least by PIGA, PIGC, PIGH, PIGP, PIGQ, PIGY and DPM2. Interacts with PIGA, PIGC and PIGQ.

The protein resides in the endoplasmic reticulum membrane. It participates in protein modification; protein glycosylation. Its function is as follows. Regulates the biosynthesis of dolichol phosphate-mannose. Regulatory subunit of the dolichol-phosphate mannose (DPM) synthase complex; essential for the ER localization and stable expression of DPM1. Part of the glycosylphosphatidylinositol-N-acetylglucosaminyltransferase (GPI-GnT) complex that catalyzes the transfer of N-acetylglucosamine from UDP-N-acetylglucosamine to phosphatidylinositol and participates in the first step of GPI biosynthesis. May act by regulating the GPI-GNT complex. This is Dolichol phosphate-mannose biosynthesis regulatory protein from Bos taurus (Bovine).